A 1250-amino-acid chain; its full sequence is Immunoglobulin superfamily DCC subclass member 4 (1250 aa).

Positions 1–24 (MARGDAGRGRGLLALTFCLLAARG) are cleaved as a signal peptide. The Extracellular segment spans residues 25-957 (ELLLPQETTV…SDSLDMHSVT (933 aa)). 4 Ig-like C2-type domains span residues 29-137 (PQET…TAVV), 143-229 (ADFS…ALLS), 242-330 (QDVV…AELR), and 335-421 (PAIT…ASLA). Cysteine 57 and cysteine 121 are oxidised to a cystine. Asparagine 90, asparagine 102, and asparagine 157 each carry an N-linked (GlcNAc...) asparagine glycan. Residues cysteine 164 and cysteine 212 are joined by a disulfide bond. N-linked (GlcNAc...) asparagine glycosylation occurs at asparagine 252. Disulfide bonds link cysteine 265–cysteine 312 and cysteine 356–cysteine 405. 5 consecutive Fibronectin type-III domains span residues 431 to 525 (APTR…TLDD), 527 to 623 (PSAA…TPSM), 632 to 741 (APAE…APAP), 752 to 845 (PPAH…TLPD), and 850 to 945 (PPSD…TLQE). Asparagine 582 carries N-linked (GlcNAc...) asparagine glycosylation. The chain crosses the membrane as a helical span at residues 958–978 (GIIVGVCLGLLCLLACMCAGL). Residues 979–1250 (RRSPHRESLP…LPRSPVSSSA (272 aa)) are Cytoplasmic-facing. Threonine 995 is subject to Phosphothreonine. Disordered stretches follow at residues 1140 to 1175 (SASN…DPGQ) and 1215 to 1250 (PGEV…SSSA).

This sequence belongs to the immunoglobulin superfamily. DCC family.

Its subcellular location is the cell membrane. In Homo sapiens (Human), this protein is Immunoglobulin superfamily DCC subclass member 4 (IGDCC4).